The sequence spans 31 residues: Cyclotide vibi-G (31 aa).

A cross-link (cyclopeptide (Gly-Asn)) is located at residues 1–31 (GTFPCGESCVFIPCLTSAIGCSCKSKVCYKN). 3 cysteine pairs are disulfide-bonded: Cys5–Cys21, Cys9–Cys23, and Cys14–Cys28.

Post-translationally, this is a cyclic peptide.

Its function is as follows. Probably participates in a plant defense mechanism. Has cytotoxic activity, active against a human lymphoma cell line with an IC(50) of 0.96 uM. This is Cyclotide vibi-G from Viola biflora (Yellow wood violet).